A 291-amino-acid chain; its full sequence is Succinate--CoA ligase [ADP-forming] subunit alpha 1 (291 aa).

Residues 20–23 (TGFQ), Lys-46, and 99–101 (VTE) each bind CoA. Residue Tyr-162 participates in substrate binding. The Tele-phosphohistidine intermediate role is filled by His-249.

This sequence belongs to the succinate/malate CoA ligase alpha subunit family. As to quaternary structure, heterotetramer of two alpha and two beta subunits.

The enzyme catalyses succinate + ATP + CoA = succinyl-CoA + ADP + phosphate. It catalyses the reaction GTP + succinate + CoA = succinyl-CoA + GDP + phosphate. It participates in carbohydrate metabolism; tricarboxylic acid cycle; succinate from succinyl-CoA (ligase route): step 1/1. Functionally, succinyl-CoA synthetase functions in the citric acid cycle (TCA), coupling the hydrolysis of succinyl-CoA to the synthesis of either ATP or GTP and thus represents the only step of substrate-level phosphorylation in the TCA. The alpha subunit of the enzyme binds the substrates coenzyme A and phosphate, while succinate binding and nucleotide specificity is provided by the beta subunit. This chain is Succinate--CoA ligase [ADP-forming] subunit alpha 1, found in Archaeoglobus fulgidus (strain ATCC 49558 / DSM 4304 / JCM 9628 / NBRC 100126 / VC-16).